A 330-amino-acid polypeptide reads, in one-letter code: Methionine import ATP-binding protein MetN (330 aa).

Residues 2–241 (IAFRGVSKVY…PSTRLHQLCF (240 aa)) form the ABC transporter domain. 38-45 (GQSGAGKS) provides a ligand contact to ATP.

The protein belongs to the ABC transporter superfamily. Methionine importer (TC 3.A.1.24) family. As to quaternary structure, the complex is composed of two ATP-binding proteins (MetN), two transmembrane proteins (MetI) and a solute-binding protein (MetQ).

Its subcellular location is the cell inner membrane. It carries out the reaction L-methionine(out) + ATP + H2O = L-methionine(in) + ADP + phosphate + H(+). It catalyses the reaction D-methionine(out) + ATP + H2O = D-methionine(in) + ADP + phosphate + H(+). Part of the ABC transporter complex MetNIQ involved in methionine import. Responsible for energy coupling to the transport system. This is Methionine import ATP-binding protein MetN from Myxococcus xanthus (strain DK1622).